We begin with the raw amino-acid sequence, 372 residues long: Glutamate 5-kinase (372 aa).

Lys-14 lines the ATP pocket. 3 residues coordinate substrate: Ser-54, Asp-141, and Asn-153. 173–174 contacts ATP; sequence TD. A PUA domain is found at 280-358; it reads AGAVVLDNGA…ADIAAILGFV (79 aa).

This sequence belongs to the glutamate 5-kinase family.

The protein localises to the cytoplasm. It catalyses the reaction L-glutamate + ATP = L-glutamyl 5-phosphate + ADP. It participates in amino-acid biosynthesis; L-proline biosynthesis; L-glutamate 5-semialdehyde from L-glutamate: step 1/2. Its function is as follows. Catalyzes the transfer of a phosphate group to glutamate to form L-glutamate 5-phosphate. The chain is Glutamate 5-kinase from Janthinobacterium sp. (strain Marseille) (Minibacterium massiliensis).